The following is a 656-amino-acid chain: Putative cysteine-rich receptor-like protein kinase 32 (656 aa).

Residues 1 to 23 form the signal peptide; the sequence is MCLQNLLSILCFVLAISFGYVSA. 2 Gnk2-homologous domains span residues 24–126 and 134–238; these read QKCV…NSSF and PTMV…GSEY. At 24 to 262 the chain is on the extracellular side; it reads QKCVDSMFFR…PDGKTISTGA (239 aa). Residues asparagine 35, asparagine 52, asparagine 61, asparagine 103, and asparagine 123 are each glycosylated (N-linked (GlcNAc...) asparagine). Residues 263–283 form a helical membrane-spanning segment; the sequence is IVAVVVSVVIFVVLLALVLVI. Residues 284-656 are Cytoplasmic-facing; it reads RKRRQSYKTL…SASITRVTPR (373 aa). The 286-residue stretch at 321-606 folds into the Protein kinase domain; the sequence is FSRNNKLGKG…IFQMLTNSSI (286 aa). Residues 327-335 and lysine 349 contribute to the ATP site; that span reads LGKGGFGEV. Tyrosine 394 bears the Phosphotyrosine mark. Aspartate 454 functions as the Proton acceptor in the catalytic mechanism. Serine 458 is subject to Phosphoserine. The residue at position 494 (threonine 494) is a Phosphothreonine. Tyrosine 502 is modified (phosphotyrosine).

The protein belongs to the protein kinase superfamily. Ser/Thr protein kinase family. CRK subfamily.

Its subcellular location is the membrane. It carries out the reaction L-seryl-[protein] + ATP = O-phospho-L-seryl-[protein] + ADP + H(+). The enzyme catalyses L-threonyl-[protein] + ATP = O-phospho-L-threonyl-[protein] + ADP + H(+). The protein is Putative cysteine-rich receptor-like protein kinase 32 (CRK32) of Arabidopsis thaliana (Mouse-ear cress).